The following is a 37-amino-acid chain: Mastoparan-VT (37 aa).

Residues Glu1 to Ala22 constitute a propeptide that is removed on maturation. 4 AXPX repeats span residues Ala4 to Ile7, Ala8 to Val11, Ala12 to Asn15, and Ala18 to Glu21. Leu36 carries the post-translational modification Leucine amide.

Belongs to the MCD family. Mastoparan subfamily. As to expression, expressed by the venom gland.

It is found in the secreted. Its subcellular location is the target cell membrane. Antimicrobial peptide with potent activity against both Gram-positive (S.aureus MIC=50 ug/ml, and B.subtilis MIC=25 ug/ml) and Gram-negative bacteria (P.aeruginosa MIC=25 ug/ml, E.coli MIC=3-50 ug/ml, K.pneumoniae MIC=25 ug/ml). Exhibits little hemolytic activity on human erythrocytes. The chain is Mastoparan-VT from Vespa tropica (Greater banded hornet).